The following is a 428-amino-acid chain: Phosphoribosylamine--glycine ligase (428 aa).

In terms of domain architecture, ATP-grasp spans 109–316 (KDFLHRHGIP…LVELCLAALD (208 aa)). ATP is bound at residue 135–196 (LRQVGAPVVV…EEFLTGEEAS (62 aa)). A disordered region spans residues 211 to 235 (SSQDHKARDDGDRGPNTGGMGAYSP). The span at 213 to 223 (QDHKARDDGDR) shows a compositional bias: basic and acidic residues. Residues glutamate 286 and asparagine 288 each coordinate Mg(2+).

This sequence belongs to the GARS family. It depends on Mg(2+) as a cofactor. Mn(2+) is required as a cofactor.

The enzyme catalyses 5-phospho-beta-D-ribosylamine + glycine + ATP = N(1)-(5-phospho-beta-D-ribosyl)glycinamide + ADP + phosphate + H(+). It functions in the pathway purine metabolism; IMP biosynthesis via de novo pathway; N(1)-(5-phospho-D-ribosyl)glycinamide from 5-phospho-alpha-D-ribose 1-diphosphate: step 2/2. The protein is Phosphoribosylamine--glycine ligase (purD) of Allochromatium vinosum (strain ATCC 17899 / DSM 180 / NBRC 103801 / NCIMB 10441 / D) (Chromatium vinosum).